The primary structure comprises 368 residues: Peptide chain release factor 2 (368 aa).

The residue at position 250 (Q250) is an N5-methylglutamine.

Belongs to the prokaryotic/mitochondrial release factor family. Methylated by PrmC. Methylation increases the termination efficiency of RF2.

The protein localises to the cytoplasm. Peptide chain release factor 2 directs the termination of translation in response to the peptide chain termination codons UGA and UAA. The sequence is that of Peptide chain release factor 2 from Mycolicibacterium smegmatis (strain ATCC 700084 / mc(2)155) (Mycobacterium smegmatis).